The following is a 371-amino-acid chain: Probable alcohol acetyltransferase (371 aa).

Catalysis depends on charge relay system residues serine 124 and histidine 295. The disordered stretch occupies residues 325 to 352 (AKALEESPKESYSRPPAHQQPLHKNDFT). A compositionally biased stretch (basic and acidic residues) spans 327–336 (ALEESPKESY).

Belongs to the AB hydrolase superfamily.

In terms of biological role, probable alcohol acetyltransferase that uses acetyl-CoA to synthesize acetate esters from various alcohols. Not involved in the synthesis of ethyl acetate. This is Probable alcohol acetyltransferase (EAT2) from Cyberlindnera fabianii (Yeast).